Consider the following 219-residue polypeptide: Flagellar transcriptional regulator FlhC (219 aa).

4 residues coordinate Zn(2+): Cys137, Cys140, Cys157, and Cys160.

The protein belongs to the FlhC family. In terms of assembly, heterohexamer composed of two FlhC and four FlhD subunits. Each FlhC binds a FlhD dimer, forming a heterotrimer, and a hexamer assembles by dimerization of two heterotrimers. It depends on Zn(2+) as a cofactor.

It is found in the cytoplasm. In terms of biological role, functions in complex with FlhD as a master transcriptional regulator that regulates transcription of several flagellar and non-flagellar operons by binding to their promoter region. Activates expression of class 2 flagellar genes, including fliA, which is a flagellum-specific sigma factor that turns on the class 3 genes. Also regulates genes whose products function in a variety of physiological pathways. This Paraburkholderia phymatum (strain DSM 17167 / CIP 108236 / LMG 21445 / STM815) (Burkholderia phymatum) protein is Flagellar transcriptional regulator FlhC.